We begin with the raw amino-acid sequence, 1461 residues long: Periaxin (1461 aa).

Ser7 is subject to Phosphoserine. In terms of domain architecture, PDZ spans Leu16–Thr99. Positions Val70–Leu84 match the Nuclear export signal motif. Residues Lys118–Arg196 carry the Nuclear localization signal motif. A Phosphoserine modification is found at Ser133. Repeat copies occupy residues Gly431 to Lys435, Gly439 to Lys443, Ala447 to Lys451, Val455 to Ala459, Val463 to Glu467, Val468 to Lys472, Val473 to Lys477, Val481 to Ala485, Val486 to Arg490, Val494 to Lys498, Val499 to Lys503, Val507 to Ala511, Val512 to Arg516, Val520 to Lys524, Val525 to Lys529, Val533 to Ala537, Val538 to Arg542, Val546 to Lys550, Val551 to Lys555, Val559 to Ala563, Val564 to Arg568, Val572 to Lys576, Val577 to Lys581, Val582 to Lys586, Val590 to Lys594, Leu595 to Lys599, Leu600 to Gln604, Val608 to Ala612, Val613 to His617, Leu618 to Gln622, Val626 to Lys630, Leu631 to Lys635, Leu636 to Lys640, Val644 to Ala648, Val649 to His653, Leu654 to Gln658, Val662 to Lys666, Met670 to Ala674, Val675 to Arg679, Val683 to Lys687, Val688 to Lys692, Val696 to Ala700, Val701 to His705, Leu706 to Gln710, Val714 to Lys718, Val719 to Lys723, Leu724 to Lys728, Val732 to Ala736, Val737 to His741, Leu742 to Gln746, Val750 to Arg754, Leu755 to Gln759, Val760 to Pro764, Ala771 to Lys775, and Ala779 to Gln783. The interval Gly431 to Gln783 is 55 X 5 AA approximate tandem repeats of [LVMAG]-[PSREQC]-[EDKL]-[LIVMAP]-[AQKHRPE]; that may have a tripeptide spacer of [LV]-P-[KER]. A phosphoserine mark is found at Ser900 and Ser1082. The span at Glu1318 to Lys1327 shows a compositional bias: basic and acidic residues. The segment at Glu1318–Val1461 is disordered. Residues Ser1349, Ser1351, Ser1363, Ser1401, Ser1407, and Ser1439 each carry the phosphoserine modification. A compositionally biased stretch (acidic residues) spans Pro1352–Ser1363.

Belongs to the periaxin family. Homodimer (via PDZ domain). Interacts with SCN10A. Found in a complex with SCN10A. Interacts with DRP2. Identified in a dystroglycan complex that contains at least PRX, DRP2, UTRN, DMD and DAG1. Detected in a complex composed of at least EZR, AHNAK, PPL and PRX. Identified in a complex with EZR, AHNAK, BFSP1, BFSP2, ANK2, PLEC, VIM and spectrin. As to expression, detected in spinal cord. Isoform 1 and isoform 2 are found in sciatic nerve and Schwann cells.

It localises to the cell membrane. The protein localises to the nucleus. Its subcellular location is the cytoplasm. It is found in the cell junction. Scaffolding protein that functions as part of a dystroglycan complex in Schwann cells, and as part of EZR and AHNAK-containing complexes in eye lens fiber cells. Required for the maintenance of the peripheral myelin sheath that is essential for normal transmission of nerve impulses and normal perception of sensory stimuli. Required for normal transport of MBP mRNA from the perinuclear to the paranodal regions. Required for normal remyelination after nerve injury. Required for normal elongation of Schwann cells and normal length of the internodes between the nodes of Ranvier. The demyelinated nodes of Ranvier permit saltatory transmission of nerve impulses; shorter internodes cause slower transmission of nerve impulses. Required for the formation of appositions between the abaxonal surface of the myelin sheath and the Schwann cell plasma membrane; the Schwann cell cytoplasm is restricted to regions between these appositions. Required for the formation of Cajal bands and of Schmidt-Lanterman incisures that correspond to short, cytoplasm-filled regions on myelinated nerves. Recruits DRP2 to the Schwann cell plasma membrane. Required for normal protein composition of the eye lens fiber cell plasma membrane and normal eye lens fiber cell morphology. In Homo sapiens (Human), this protein is Periaxin (PRX).